A 462-amino-acid polypeptide reads, in one-letter code: Probable protein phosphatase 2C 1 (462 aa).

The region spanning 60-362 (SSCIFTQQGR…DDCAVVCLFL (303 aa)) is the PPM-type phosphatase domain. Mn(2+) is bound by residues Asp95, Gly96, Asp307, and Asp353. Disordered stretches follow at residues 369 to 394 (ETSDNEEQCFSSATNAVESDESQGAE) and 421 to 443 (EADNAEKEKTREGEQNWSGLEGV). Residues 376–385 (QCFSSATNAV) are compositionally biased toward polar residues. The span at 424 to 434 (NAEKEKTREGE) shows a compositional bias: basic and acidic residues.

The protein belongs to the PP2C family. In terms of assembly, interacts with GCN5. Mg(2+) is required as a cofactor. Requires Mn(2+) as cofactor.

The enzyme catalyses O-phospho-L-seryl-[protein] + H2O = L-seryl-[protein] + phosphate. The catalysed reaction is O-phospho-L-threonyl-[protein] + H2O = L-threonyl-[protein] + phosphate. Its function is as follows. May act as negative regulator of GCN5. The polypeptide is Probable protein phosphatase 2C 1 (PPC6-6) (Arabidopsis thaliana (Mouse-ear cress)).